The chain runs to 213 residues: Thymidylate kinase (213 aa).

10-17 contributes to the ATP binding site; that stretch reads GLEGAGKT.

The protein belongs to the thymidylate kinase family.

It catalyses the reaction dTMP + ATP = dTDP + ADP. Its function is as follows. Phosphorylation of dTMP to form dTDP in both de novo and salvage pathways of dTTP synthesis. This chain is Thymidylate kinase, found in Escherichia coli O81 (strain ED1a).